The primary structure comprises 167 residues: Large ribosomal subunit protein bL9 (167 aa).

This sequence belongs to the bacterial ribosomal protein bL9 family.

In terms of biological role, binds to the 23S rRNA. This chain is Large ribosomal subunit protein bL9, found in Chlamydia muridarum (strain MoPn / Nigg).